Here is a 463-residue protein sequence, read N- to C-terminus: L-seryl-tRNA(Sec) selenium transferase (463 aa).

Lysine 295 carries the N6-(pyridoxal phosphate)lysine modification.

The protein belongs to the SelA family. As to quaternary structure, homodecamer; pentamer of dimers. Binds only one seryl-tRNA(Sec) per dimer. It depends on pyridoxal 5'-phosphate as a cofactor.

The protein localises to the cytoplasm. The catalysed reaction is L-seryl-tRNA(Sec) + selenophosphate + H(+) = L-selenocysteinyl-tRNA(Sec) + phosphate. The protein operates within aminoacyl-tRNA biosynthesis; selenocysteinyl-tRNA(Sec) biosynthesis; selenocysteinyl-tRNA(Sec) from L-seryl-tRNA(Sec) (bacterial route): step 1/1. Converts seryl-tRNA(Sec) to selenocysteinyl-tRNA(Sec) required for selenoprotein biosynthesis. In Escherichia coli (strain 55989 / EAEC), this protein is L-seryl-tRNA(Sec) selenium transferase.